The chain runs to 389 residues: 8-amino-7-oxononanoate synthase (389 aa).

R23 provides a ligand contact to substrate. G114 to Y115 contacts pyridoxal 5'-phosphate. Residue H139 coordinates substrate. Residues S185, H213, and T242 each contribute to the pyridoxal 5'-phosphate site. K245 is modified (N6-(pyridoxal phosphate)lysine). Residue T357 participates in substrate binding.

Belongs to the class-II pyridoxal-phosphate-dependent aminotransferase family. BioF subfamily. In terms of assembly, homodimer. Requires pyridoxal 5'-phosphate as cofactor.

It catalyses the reaction 6-carboxyhexanoyl-[ACP] + L-alanine + H(+) = (8S)-8-amino-7-oxononanoate + holo-[ACP] + CO2. It functions in the pathway cofactor biosynthesis; biotin biosynthesis. In terms of biological role, catalyzes the decarboxylative condensation of pimeloyl-[acyl-carrier protein] and L-alanine to produce 8-amino-7-oxononanoate (AON), [acyl-carrier protein], and carbon dioxide. This chain is 8-amino-7-oxononanoate synthase, found in Acidithiobacillus ferrooxidans (strain ATCC 23270 / DSM 14882 / CIP 104768 / NCIMB 8455) (Ferrobacillus ferrooxidans (strain ATCC 23270)).